The following is an 805-amino-acid chain: Leucine--tRNA ligase (805 aa).

The 'HIGH' region signature appears at 40-51 (PYPSGSGLHVGH). The 'KMSKS' region motif lies at 576–580 (KMSKS). Lys579 contributes to the ATP binding site.

The protein belongs to the class-I aminoacyl-tRNA synthetase family.

It localises to the cytoplasm. The catalysed reaction is tRNA(Leu) + L-leucine + ATP = L-leucyl-tRNA(Leu) + AMP + diphosphate. The chain is Leucine--tRNA ligase from Chlorobium limicola (strain DSM 245 / NBRC 103803 / 6330).